The sequence spans 205 residues: Large ribosomal subunit protein uL3 (205 aa).

It belongs to the universal ribosomal protein uL3 family. Part of the 50S ribosomal subunit. Forms a cluster with proteins L14 and L19.

Its function is as follows. One of the primary rRNA binding proteins, it binds directly near the 3'-end of the 23S rRNA, where it nucleates assembly of the 50S subunit. This chain is Large ribosomal subunit protein uL3, found in Thermosipho melanesiensis (strain DSM 12029 / CIP 104789 / BI429).